We begin with the raw amino-acid sequence, 988 residues long: Voltage-gated delayed rectifier potassium channel KCNH5 (988 aa).

Topologically, residues 1 to 217 (MPGGKRGLVA…LHYCAFKTTW (217 aa)) are cytoplasmic. In terms of domain architecture, PAS spans 14–86 (TFLENIVRRS…TIEKVRQTFD (73 aa)). The PAC domain maps to 91-143 (NCFEVLLYKKNRTPVWFYMQIAPIRNEHEKVVLFLCTFKDITLFKQPIEDDST). The helical transmembrane segment at 218 to 238 (DWVILILTFYTAIMVPYNVSF) threads the bilayer. Over 239-243 (KTKQN) the chain is Extracellular. A helical membrane pass occupies residues 244–264 (NIAWLVLDSVVDVIFLVDIVL). The Cytoplasmic segment spans residues 265–291 (NFHTTFVGPGGEVISDPKLIRMNYLKT). Residues 292 to 312 (WFVIDLLSCLPYDIINAFENV) traverse the membrane as a helical segment. Topologically, residues 313–319 (DEGISSL) are extracellular. The helical; Voltage-sensor transmembrane segment at 320–340 (FSSLKVVRLLRLGRVARKLDH) threads the bilayer. At 341–346 (YLEYGA) the chain is on the cytoplasmic side. The chain crosses the membrane as a helical span at residues 347–367 (AVLVLLVCVFGLVAHWLACIW). Residues 368–419 (YSIGDYEVIDEVTNTIQIDSWLYQLALSIGTPYRYNTSAGIWEGGPSKDSLY) lie on the Extracellular side of the membrane. Asparagine 403 carries an N-linked (GlcNAc...) asparagine glycan. Positions 420–440 (VSSLYFTMTSLTTIGFGNIAP) form an intramembrane region, pore-forming. A Selectivity filter motif is present at residues 432–437 (TIGFGN). The Extracellular segment spans residues 441–446 (TTDVEK). A helical membrane pass occupies residues 447-467 (MFSVAMMMVGSLLYATIFGNV). The Cytoplasmic segment spans residues 468–988 (TTIFQQMYAN…PESDKDEINF (521 aa)). 550-668 (AFRLASDGCL…SFSRNLTLTC (119 aa)) serves as a coordination point for a nucleoside 3',5'-cyclic phosphate. Residues 704 to 715 (HPVRKLFQKFKQ) are calmodulin-binding. Positions 721–741 (IQGSAQSDPERSQLQVESRPL) are disordered. Over residues 723-741 (GSAQSDPERSQLQVESRPL) the composition is skewed to polar residues. Lysine 785 is covalently cross-linked (Glycyl lysine isopeptide (Lys-Gly) (interchain with G-Cter in ubiquitin)). Positions 838–893 (GLLSEDPKGSDSENSVTKNPLRKTDSCDSGITKSDLRLDKAGEARSPLEHSPSQAD) are disordered. A compositionally biased stretch (basic and acidic residues) spans 871–885 (SDLRLDKAGEARSPL). At serine 883 the chain carries Phosphoserine. Positions 909–948 (TLQEVKHELKEDIQLLSCRMTALEKQVAEILKLLSEKSVP) are CAD (involved in subunit assembly).

It belongs to the potassium channel family. H (Eag) (TC 1.A.1.20) subfamily. Kv10.2/KCNH5 sub-subfamily. In terms of assembly, homotetramer. The potassium channel is probably composed of a homo- or heterotetrameric complex of pore-forming alpha subunits that can associate with modulating beta subunits. Heteromultimer with KCNH1/EAG.

The protein resides in the membrane. The enzyme catalyses K(+)(in) = K(+)(out). Functionally, pore-forming (alpha) subunit of a voltage-gated delayed rectifier potassium channel that mediates outward-rectifying potassium currents which, on depolarization, reaches a steady-state level and do not inactivate. The kinetic is characterized by a slow activation time course and a small voltage dependence of the activation time constants, therefore, starts to open at more negative voltages. The activation kinetics depend on the prepulse potential and external divalent cation concentration. The time course of activation is biphasic with a fast and a slowly activating current component. With negative prepulses, the current activation is delayed and slowed down several fold, whereas more positive prepulses speed up activation, therefore the activation rate depends on holding potential. The protein is Voltage-gated delayed rectifier potassium channel KCNH5 of Mus musculus (Mouse).